The chain runs to 208 residues: 3-isopropylmalate dehydratase small subunit (208 aa).

This sequence belongs to the LeuD family. LeuD type 1 subfamily. In terms of assembly, heterodimer of LeuC and LeuD.

It catalyses the reaction (2R,3S)-3-isopropylmalate = (2S)-2-isopropylmalate. It functions in the pathway amino-acid biosynthesis; L-leucine biosynthesis; L-leucine from 3-methyl-2-oxobutanoate: step 2/4. Catalyzes the isomerization between 2-isopropylmalate and 3-isopropylmalate, via the formation of 2-isopropylmaleate. The polypeptide is 3-isopropylmalate dehydratase small subunit (Gluconobacter oxydans (strain 621H) (Gluconobacter suboxydans)).